Consider the following 370-residue polypeptide: MSTRAPHILMVGGGTGGHVYPAIAIADAVRALRPDAQIVFAGTQDRLEARAVPEAGYALHPITAQGLQRRAVASNLLLPFRVAQGLVQSWRLVGAIEPDVAVGTGGYVAAPVLMAAWLRGRPLLIQEQNAYAGLTNRVLARLALRIHLAFPEAKDWVPAEHAVVSGNPTRQSLRDADPDAARAAFNVPEDGRVLLVMGGSLGSAAINGAIQRILDPLLAEGDVHVVWQTGTRYYDDLTEDLDEHPRLRVVEYIDQMGHAYAAADLAVCRAGALTCSELTVTGTPAVLVPSPNVTADHQTKNARSLERAGAAVWLDEADLDAHLETVLLDLLGNSDRRARMAEAARDRARPDAAETIARDVLALADRYRTN.

Residues Thr15–Gly17, Asn129, Arg170, Ser200, Ile253, and Gln298 each bind UDP-N-acetyl-alpha-D-glucosamine.

This sequence belongs to the glycosyltransferase 28 family. MurG subfamily.

It is found in the cell inner membrane. The catalysed reaction is di-trans,octa-cis-undecaprenyl diphospho-N-acetyl-alpha-D-muramoyl-L-alanyl-D-glutamyl-meso-2,6-diaminopimeloyl-D-alanyl-D-alanine + UDP-N-acetyl-alpha-D-glucosamine = di-trans,octa-cis-undecaprenyl diphospho-[N-acetyl-alpha-D-glucosaminyl-(1-&gt;4)]-N-acetyl-alpha-D-muramoyl-L-alanyl-D-glutamyl-meso-2,6-diaminopimeloyl-D-alanyl-D-alanine + UDP + H(+). It functions in the pathway cell wall biogenesis; peptidoglycan biosynthesis. Functionally, cell wall formation. Catalyzes the transfer of a GlcNAc subunit on undecaprenyl-pyrophosphoryl-MurNAc-pentapeptide (lipid intermediate I) to form undecaprenyl-pyrophosphoryl-MurNAc-(pentapeptide)GlcNAc (lipid intermediate II). The chain is UDP-N-acetylglucosamine--N-acetylmuramyl-(pentapeptide) pyrophosphoryl-undecaprenol N-acetylglucosamine transferase from Salinibacter ruber (strain DSM 13855 / M31).